A 357-amino-acid chain; its full sequence is Protein-glutamate methylesterase/protein-glutamine glutaminase 5 (357 aa).

Positions Arg-10–Glu-127 constitute a Response regulatory domain. At Asp-61 the chain carries 4-aspartylphosphate. The CheB-type methylesterase domain maps to Pro-161–Gly-357. Residues Ser-176, His-203, and Asp-301 contribute to the active site.

This sequence belongs to the CheB family. Post-translationally, phosphorylated by CheA. Phosphorylation of the N-terminal regulatory domain activates the methylesterase activity.

It localises to the cytoplasm. It catalyses the reaction [protein]-L-glutamate 5-O-methyl ester + H2O = L-glutamyl-[protein] + methanol + H(+). The catalysed reaction is L-glutaminyl-[protein] + H2O = L-glutamyl-[protein] + NH4(+). Functionally, involved in chemotaxis. Part of a chemotaxis signal transduction system that modulates chemotaxis in response to various stimuli. Catalyzes the demethylation of specific methylglutamate residues introduced into the chemoreceptors (methyl-accepting chemotaxis proteins or MCP) by CheR. Also mediates the irreversible deamidation of specific glutamine residues to glutamic acid. The protein is Protein-glutamate methylesterase/protein-glutamine glutaminase 5 of Geobacter metallireducens (strain ATCC 53774 / DSM 7210 / GS-15).